A 288-amino-acid chain; its full sequence is DegV domain-containing protein MYPU_3590 (288 aa).

Positions 3 to 275 (IAIVIDSSSG…LGAIAISLVK (273 aa)) constitute a DegV domain. Positions 61 and 92 each coordinate hexadecanoate.

Functionally, may bind long-chain fatty acids, such as palmitate, and may play a role in lipid transport or fatty acid metabolism. This chain is DegV domain-containing protein MYPU_3590, found in Mycoplasmopsis pulmonis (strain UAB CTIP) (Mycoplasma pulmonis).